Reading from the N-terminus, the 199-residue chain is uncharacterized protein (199 aa).

The disordered stretch occupies residues 1 to 41 (MKFKRDENQNSTHHRGNKNNTNNDDDDKEEEEEIINDTTMP). The segment covering 23–35 (NDDDDKEEEEEII) has biased composition (acidic residues). The next 3 helical transmembrane spans lie at 73-93 (LILDLVGFFTQIIPIFGFAFW), 96-116 (ISTYLIFKVYGSGLHLCVSFL), and 166-186 (IAIAVALIAIYKIISYFSPYL).

The protein localises to the membrane. This is an uncharacterized protein from Dictyostelium discoideum (Social amoeba).